The chain runs to 179 residues: Ribosome maturation factor RimM (179 aa).

The 73-residue stretch at 98–170 (PDEFWDRRLR…RIVVSGIPGL (73 aa)) folds into the PRC barrel domain.

It belongs to the RimM family. Binds ribosomal protein uS19.

The protein localises to the cytoplasm. Functionally, an accessory protein needed during the final step in the assembly of 30S ribosomal subunit, possibly for assembly of the head region. Essential for efficient processing of 16S rRNA. May be needed both before and after RbfA during the maturation of 16S rRNA. It has affinity for free ribosomal 30S subunits but not for 70S ribosomes. This chain is Ribosome maturation factor RimM, found in Cutibacterium acnes (strain DSM 16379 / KPA171202) (Propionibacterium acnes).